The chain runs to 202 residues: UPF0637 protein Exig_2520 (202 aa).

This sequence belongs to the UPF0637 family.

The protein is UPF0637 protein Exig_2520 of Exiguobacterium sibiricum (strain DSM 17290 / CCUG 55495 / CIP 109462 / JCM 13490 / 255-15).